The primary structure comprises 873 residues: Leucine--tRNA ligase (873 aa).

Residues 48-58 carry the 'HIGH' region motif; sequence PYPSGKLHMGH. Positions 636-640 match the 'KMSKS' region motif; the sequence is KMSKS. ATP is bound at residue Lys-639.

Belongs to the class-I aminoacyl-tRNA synthetase family.

The protein resides in the cytoplasm. It carries out the reaction tRNA(Leu) + L-leucine + ATP = L-leucyl-tRNA(Leu) + AMP + diphosphate. The polypeptide is Leucine--tRNA ligase (Cupriavidus metallidurans (strain ATCC 43123 / DSM 2839 / NBRC 102507 / CH34) (Ralstonia metallidurans)).